The sequence spans 416 residues: Putative pseudouridine transporter (416 aa).

At 1 to 2 the chain is on the periplasmic side; that stretch reads MD. The helical transmembrane segment at 3 to 23 threads the bilayer; the sequence is IMRSVVGMVVLLAIAFLLSVN. At 24–31 the chain is on the cytoplasmic side; the sequence is KKSISLRT. A helical membrane pass occupies residues 32 to 52; that stretch reads VGAALLLQIAIGGIMLYFPPG. Topologically, residues 53 to 104 are periplasmic; it reads KWAVEQAALGVHKVMSYSDAGSAFIFGSLVGPKMDVLFDGAGFIFAFRVLPA. The chain crosses the membrane as a helical span at residues 105 to 125; sequence IIFVTALISLLYYIGVMGLLI. The Cytoplasmic portion of the chain corresponds to 126–172; that stretch reads RILGSIFQKALNISKIESFVAVTTIFLGQNEIPAIVKPFIDRMNRNE. A helical transmembrane segment spans residues 173–193; that stretch reads LFTAICSGMASIAGSMMIGYA. Residues 194–196 are Periplasmic-facing; sequence GMG. The chain crosses the membrane as a helical span at residues 197–217; that stretch reads VPIDYLLAASLMAIPGGILFA. At 218–268 the chain is on the cytoplasmic side; sequence RILSPATEPSQVTFENLSFSETPPKSFIEAAASGAMTGLKIAAGVATVVMA. A helical transmembrane segment spans residues 269–289; the sequence is FVAIIALINGIIGGIGGWFGF. Residues 290–352 are Periplasmic-facing; it reads ANASLESIFG…QTGGTLEVKT (63 aa). The helical transmembrane segment at 353–373 threads the bilayer; it reads IAIISFALCGFANFGSIGVVV. Residues 374 to 394 are Cytoplasmic-facing; that stretch reads GAFSAISPKRAPEIAQLGLRA. Residues 395–415 traverse the membrane as a helical segment; that stretch reads LAAATLSNLMSATIAGFFIGL. Position 416 (alanine 416) is a topological domain, periplasmic.

Belongs to the concentrative nucleoside transporter (CNT) (TC 2.A.41) family.

Its subcellular location is the cell inner membrane. Its function is as follows. Could be involved in pseudouridine transport. The chain is Putative pseudouridine transporter (psuT) from Escherichia coli (strain K12).